The primary structure comprises 155 residues: uncharacterized protein (155 aa).

A signal peptide spans 1–23 (MKIRSLSRFVLASTMFASFTASA).

To E.coli YkfB.

This is an uncharacterized protein from Escherichia coli (strain K12).